The primary structure comprises 1437 residues: DNA polymerase III PolC-type (1437 aa).

Residues 420 to 576 (YVIFDVETTG…YDSETTGHLC (157 aa)) form the Exonuclease domain.

This sequence belongs to the DNA polymerase type-C family. PolC subfamily.

It localises to the cytoplasm. The catalysed reaction is DNA(n) + a 2'-deoxyribonucleoside 5'-triphosphate = DNA(n+1) + diphosphate. Functionally, required for replicative DNA synthesis. This DNA polymerase also exhibits 3' to 5' exonuclease activity. This Pediococcus pentosaceus (strain ATCC 25745 / CCUG 21536 / LMG 10740 / 183-1w) protein is DNA polymerase III PolC-type.